The primary structure comprises 302 residues: Glycine N-acyltransferase-like protein 1 (302 aa).

This sequence belongs to the glycine N-acyltransferase family. Expressed in liver and kidney and, at lower levels, in pancreas, testis, ovary and stomach.

It catalyses the reaction an acyl-CoA + L-glutamine = an N(2)-acyl-L-glutamine + CoA + H(+). Acyltransferase which transfers an acyl group to the N-terminus of glutamine. Can use phenylacetyl-CoA as an acyl donor. This is Glycine N-acyltransferase-like protein 1 from Homo sapiens (Human).